Here is a 204-residue protein sequence, read N- to C-terminus: NADH-quinone oxidoreductase subunit C (204 aa).

The protein belongs to the complex I 30 kDa subunit family. NDH-1 is composed of 14 different subunits. Subunits NuoB, C, D, E, F, and G constitute the peripheral sector of the complex.

The protein resides in the cell inner membrane. It carries out the reaction a quinone + NADH + 5 H(+)(in) = a quinol + NAD(+) + 4 H(+)(out). In terms of biological role, NDH-1 shuttles electrons from NADH, via FMN and iron-sulfur (Fe-S) centers, to quinones in the respiratory chain. The immediate electron acceptor for the enzyme in this species is believed to be ubiquinone. Couples the redox reaction to proton translocation (for every two electrons transferred, four hydrogen ions are translocated across the cytoplasmic membrane), and thus conserves the redox energy in a proton gradient. This Rhodopseudomonas palustris (strain ATCC BAA-98 / CGA009) protein is NADH-quinone oxidoreductase subunit C.